A 214-amino-acid chain; its full sequence is Alkaline phosphatase-like protein (214 aa).

4 helical membrane passes run 3–23, 48–68, 141–161, and 177–197; these read EIII…LIMI, LGII…ALIL, FLIL…SLGA, and YSSV…LLFV.

Belongs to the DedA family.

It localises to the cell membrane. The polypeptide is Alkaline phosphatase-like protein (apl) (Lactococcus lactis subsp. cremoris (strain MG1363)).